Reading from the N-terminus, the 401-residue chain is Pyruvyl transferase 1 (401 aa).

The N-terminal stretch at 1-30 is a signal peptide; the sequence is MFANINIRKSVWLFLLAAVSCTLFIYGVTR. The tract at residues 38–64 is disordered; the sequence is NPSSLTSPSSSTSVDKKKPLFTKSPRN. The span at 39–50 shows a compositional bias: low complexity; the sequence is PSSLTSPSSSTS.

This sequence belongs to the polysaccharide pyruvyl transferase family.

In terms of biological role, involved in cell wall biogenesis. Has a role in the addition of Gal-beta1,3 moieties to galactomannans and their subsequent pyruvylation. The chain is Pyruvyl transferase 1 (pvg1) from Schizosaccharomyces pombe (strain 972 / ATCC 24843) (Fission yeast).